Reading from the N-terminus, the 1124-residue chain is RTFVKKYSASRQFTGEGYLEYRTTSGNIIDSDKDELRVEFSTVQPSGLLFYARNSGGPFADYVALELVGGRLRFSIRYGRSSHSTENLHETLLGKNLNDAKSHSVEILHDKDVTTIYLDKTSDQEKAEHSFKTKYTKLDIDVAMYVGGAFDFKALLSVKSNALFMGCIFQAEFKKILPGPEKVIDFLKDDKVTTYPRTMNQKCVAQTYEPFTFSSDDSSFVCSVGGLSSANSLSGSFVFRTYKPSGVLLKQVDGGNGFELSYMEMDVQLKVIIRNSETLLNINYQNELTKINKGNWHYVTFNISQTSFELSVGSKRETRTPAVTLPSNFFKDGLTAGGFVGCMNELIINKQKCQPNAGSRIKNVEWSGCNITDFCIFSPCLHGGECTQTGKTFSCGCSGTGYDKGPNSLSVCQFSESESTCESLKKNNPSLSLSDRSYALDFDDSGPIRTYKAFCNFSADPPTTRVESRDFKIKLTPSKQPISQRISYEPSLDAAKALARRSEWCYQFVDFGCKKAKLHTGSNNEKLGFWVSSNGVYQSYWGGAKQGSRSCACGETNPNSCIDSSKKCNCDAGLDKWHNDEGYLNSTTLLPVVEVMFKGVTSGTEANFTVGHLYCAGEISNTATFVNEDGFIKLEKWSPPSNGVISLFFKTPYEKGVLLYNGMPEKDFFQVEIINETSVGLSYNIGNGVRKIELSLGDKQVNDRSWHHVMIYHNMKVFGFRLDNQEGKHENPLFLKRELNLNNELYVAGYPYDVSKGFVGCIRGLDVNGEVQDLSKLAGEAVFVKSGCGAACENNSCKNHAKCLDNYNVYFCDCSKTPYYGYFCHEENGASFKDPGSQLVYEYPSASDVFRFDIVVGFKLGEGKPCIGDIIRLGSSDKSQFYRLSLTNRKLQFDFKGPRGQGSITIDPPSVGDFCRDVHTFALSRRYKVVNYTIDGVKKPKEEIERLDGLFTSMKKVTIGKEGDGGFKGCITGVKVTREAVGQKPETVEPIKEYLYDDKNTDLVTSKHVSRATCGPEPKVPEIPTPRPVGQRADVSTPQGITTNPKLQAEDDDKTAIIVVVVLILVLLLVVLILVIYWYWARHKGEYHTHEDDEELKATDPYIEPAAPRKLKGEEPEKKKEWYI.

The Extracellular segment spans residues 1-1055 (RTFVKKYSAS…KLQAEDDDKT (1055 aa)). 2 Laminin G-like domains span residues 8–203 (SASR…NQKC) and 210–369 (PFTF…WSGC). Disulfide bonds link cysteine 167-cysteine 203, cysteine 342-cysteine 369, cysteine 375-cysteine 386, cysteine 380-cysteine 395, cysteine 397-cysteine 412, cysteine 761-cysteine 788, cysteine 792-cysteine 803, cysteine 797-cysteine 812, and cysteine 814-cysteine 824. Residues 371–413 (ITDFCIFSPCLHGGECTQTGKTFSCGCSGTGYDKGPNSLSVCQ) form the EGF-like 1 domain. The 168-residue stretch at 621–788 (NTATFVNEDG…GEAVFVKSGC (168 aa)) folds into the Laminin G-like 3 domain. Residues 789 to 825 (GAACENNSCKNHAKCLDNYNVYFCDCSKTPYYGYFCH) enclose the EGF-like 2 domain. The interval 1011 to 1047 (RATCGPEPKVPEIPTPRPVGQRADVSTPQGITTNPKL) is disordered. Polar residues predominate over residues 1034–1046 (DVSTPQGITTNPK). The chain crosses the membrane as a helical span at residues 1056 to 1076 (AIIVVVVLILVLLLVVLILVI). Residues 1077 to 1124 (YWYWARHKGEYHTHEDDEELKATDPYIEPAAPRKLKGEEPEKKKEWYI) lie on the Cytoplasmic side of the membrane. The segment at 1090 to 1124 (HEDDEELKATDPYIEPAAPRKLKGEEPEKKKEWYI) is disordered. Basic and acidic residues predominate over residues 1111 to 1124 (LKGEEPEKKKEWYI).

In terms of tissue distribution, component of the acid-insoluble organic matrix of the aragonitic skeleton (at protein level).

It is found in the membrane. The protein is EGF and laminin G domain-containing protein of Acropora millepora (Staghorn coral).